The chain runs to 270 residues: Putative phosphoenolpyruvate synthase regulatory protein (270 aa).

Residue 150 to 157 coordinates ADP; sequence GVSRCGKT.

The protein belongs to the pyruvate, phosphate/water dikinase regulatory protein family. PSRP subfamily.

It catalyses the reaction [pyruvate, water dikinase] + ADP = [pyruvate, water dikinase]-phosphate + AMP + H(+). It carries out the reaction [pyruvate, water dikinase]-phosphate + phosphate + H(+) = [pyruvate, water dikinase] + diphosphate. In terms of biological role, bifunctional serine/threonine kinase and phosphorylase involved in the regulation of the phosphoenolpyruvate synthase (PEPS) by catalyzing its phosphorylation/dephosphorylation. This chain is Putative phosphoenolpyruvate synthase regulatory protein, found in Shewanella frigidimarina (strain NCIMB 400).